The chain runs to 75 residues: MARFFRRRKFCRFKADGVKEIDYKDIATLKNYITETGKIVPSRITGTSAKYQRQLARAIKRARYLSLLPYTDSHQ.

It belongs to the bacterial ribosomal protein bS18 family. In terms of assembly, part of the 30S ribosomal subunit. Forms a tight heterodimer with protein bS6.

Binds as a heterodimer with protein bS6 to the central domain of the 16S rRNA, where it helps stabilize the platform of the 30S subunit. This Idiomarina loihiensis (strain ATCC BAA-735 / DSM 15497 / L2-TR) protein is Small ribosomal subunit protein bS18.